Consider the following 253-residue polypeptide: 3-deoxy-manno-octulosonate cytidylyltransferase (253 aa).

The protein belongs to the KdsB family.

It is found in the cytoplasm. The catalysed reaction is 3-deoxy-alpha-D-manno-oct-2-ulosonate + CTP = CMP-3-deoxy-beta-D-manno-octulosonate + diphosphate. The protein operates within nucleotide-sugar biosynthesis; CMP-3-deoxy-D-manno-octulosonate biosynthesis; CMP-3-deoxy-D-manno-octulosonate from 3-deoxy-D-manno-octulosonate and CTP: step 1/1. Its pathway is bacterial outer membrane biogenesis; lipopolysaccharide biosynthesis. In terms of biological role, activates KDO (a required 8-carbon sugar) for incorporation into bacterial lipopolysaccharide in Gram-negative bacteria. The polypeptide is 3-deoxy-manno-octulosonate cytidylyltransferase (Pseudoalteromonas translucida (strain TAC 125)).